The primary structure comprises 250 residues: Mediator of RNA polymerase II transcription subunit 6 (250 aa).

A disordered region spans residues 166–250; the sequence is KKREEEKKED…EPTARTTSKQ (85 aa). The span at 204 to 223 shows a compositional bias: acidic residues; the sequence is PAEDALEREEKEEVEEEEEE. Basic and acidic residues predominate over residues 224–239; it reads TLKTEEPTTSTDEPKF.

This sequence belongs to the Mediator complex subunit 6 family. In terms of assembly, component of the Mediator complex. Interacts with let-19/mdt-13. Interacts with RNA polymerase II. Interacts with mdt-28.

It localises to the nucleus. Its function is as follows. Component of the Mediator complex, a coactivator involved in the regulated transcription of nearly all RNA polymerase II-dependent genes. Mediator functions as a bridge to convey information from gene-specific regulatory proteins to the basal RNA polymerase II transcription machinery. Mediator is recruited to promoters by direct interactions with regulatory proteins and serves as a scaffold for the assembly of a functional preinitiation complex with RNA polymerase II and the general transcription factors. Acts to repress beta-catenin target genes. Required for asymmetric division of T-cells and for gonad and germ cell development. This is Mediator of RNA polymerase II transcription subunit 6 (mdt-6) from Caenorhabditis elegans.